Consider the following 510-residue polypeptide: ATP synthase subunit alpha (510 aa).

170–177 (GDRQTGKT) serves as a coordination point for ATP.

This sequence belongs to the ATPase alpha/beta chains family. As to quaternary structure, F-type ATPases have 2 components, CF(1) - the catalytic core - and CF(0) - the membrane proton channel. CF(1) has five subunits: alpha(3), beta(3), gamma(1), delta(1), epsilon(1). CF(0) has three main subunits: a(1), b(2) and c(9-12). The alpha and beta chains form an alternating ring which encloses part of the gamma chain. CF(1) is attached to CF(0) by a central stalk formed by the gamma and epsilon chains, while a peripheral stalk is formed by the delta and b chains.

The protein resides in the cell inner membrane. The enzyme catalyses ATP + H2O + 4 H(+)(in) = ADP + phosphate + 5 H(+)(out). Its function is as follows. Produces ATP from ADP in the presence of a proton gradient across the membrane. The alpha chain is a regulatory subunit. In Dictyoglomus thermophilum (strain ATCC 35947 / DSM 3960 / H-6-12), this protein is ATP synthase subunit alpha.